The chain runs to 158 residues: Transcription elongation factor GreA (158 aa).

Residues 53 to 73 (EQQGFIEGRIKEIEAKLSNAQ) adopt a coiled-coil conformation.

The protein belongs to the GreA/GreB family.

Its function is as follows. Necessary for efficient RNA polymerase transcription elongation past template-encoded arresting sites. The arresting sites in DNA have the property of trapping a certain fraction of elongating RNA polymerases that pass through, resulting in locked ternary complexes. Cleavage of the nascent transcript by cleavage factors such as GreA or GreB allows the resumption of elongation from the new 3'terminus. GreA releases sequences of 2 to 3 nucleotides. In Thioalkalivibrio sulfidiphilus (strain HL-EbGR7), this protein is Transcription elongation factor GreA.